Reading from the N-terminus, the 387-residue chain is MSWWYRRSIGETEQKRIEINGVSPTYQSVALIVGVTGIAGSGLAETLSFSDTPGGPWKVYGVARRPCPKWLAKLNVNYVQCDIANTDETYSKVAPLTDITHIFYVSWTGSEDVALNTLMFKNILDSVIPNAPNLKHVSLQTGIKYYWGNMAEMDSTNQPHECPFYENMPRLKQDNFYYNLEDLVYDSAVRKNGLSWSIHRPALIFGFSPCSMMNTVSTLCVYAAICKHENKPLVYTGTETSWTCLWDAVDSDLLAEHFLWAATVPNAKNQAFNINNGDVFKWKHMWKVLAKEFDIEAIGYEGKEPVLLEDLMKDKDSVWDEIVKKHDLVPTKLRDIAAFWLADVVFRNKETLCSMNKNKEFGFMGFRDTTKSFVSSINKMRDFKFIP.

NADP(+) contacts are provided by residues 36–38 (TGI), 64–65 (RR), 82–83 (DI), 106–107 (SW), and Gln140. Catalysis depends on residues Lys144 and Tyr177. Lys144 and Tyr177 together coordinate substrate. NADP(+) is bound by residues Tyr177 and 211-213 (SMM).

This sequence belongs to the short-chain dehydrogenases/reductases (SDR) family. Highly divergent. As to expression, expressed in leaves.

The enzyme catalyses (S)-8-oxocitronellyl enol + NADP(+) = (6E)-8-oxogeranial + NADPH + H(+). It catalyses the reaction (S)-8-oxocitronellyl enol + NAD(+) = (6E)-8-oxogeranial + NADH + H(+). The catalysed reaction is (R)-8-oxocitronellyl enol + NADP(+) = (6E)-8-oxogeranial + NADPH + H(+). Its function is as follows. Iridoid synthase that catalyzes the first step in generation of the iridoid ring scaffold using the linear monoterpene (6E)-8-oxogeranial as substrate. Reduces 8-oxogeranial, generating an unstable product that is subsequently cyclized into several possible products, either non-enzymically or by dedicated cyclases. Iridoids comprise a large family of distinctive bicyclic monoterpenes that possess a wide range of pharmacological activities, including anticancer, anti-inflammatory, antifungal and antibacterial activities. The polypeptide is (S)-8-oxocitronellyl enol synthase (Antirrhinum majus (Garden snapdragon)).